The primary structure comprises 102 residues: UPF0251 protein ASA_1331 (102 aa).

The protein belongs to the UPF0251 family.

This chain is UPF0251 protein ASA_1331, found in Aeromonas salmonicida (strain A449).